Here is a 475-residue protein sequence, read N- to C-terminus: ATP synthase subunit beta (475 aa).

160–167 (GGAGVGKT) is a binding site for ATP.

This sequence belongs to the ATPase alpha/beta chains family. In terms of assembly, F-type ATPases have 2 components, CF(1) - the catalytic core - and CF(0) - the membrane proton channel. CF(1) has five subunits: alpha(3), beta(3), gamma(1), delta(1), epsilon(1). CF(0) has three main subunits: a(1), b(2) and c(9-12). The alpha and beta chains form an alternating ring which encloses part of the gamma chain. CF(1) is attached to CF(0) by a central stalk formed by the gamma and epsilon chains, while a peripheral stalk is formed by the delta and b chains.

The protein localises to the cell membrane. It catalyses the reaction ATP + H2O + 4 H(+)(in) = ADP + phosphate + 5 H(+)(out). Produces ATP from ADP in the presence of a proton gradient across the membrane. The catalytic sites are hosted primarily by the beta subunits. The polypeptide is ATP synthase subunit beta (Mycolicibacterium vanbaalenii (strain DSM 7251 / JCM 13017 / BCRC 16820 / KCTC 9966 / NRRL B-24157 / PYR-1) (Mycobacterium vanbaalenii)).